The sequence spans 541 residues: Chaperonin GroEL 1 (541 aa).

ATP contacts are provided by residues 29 to 32 (TLGP), 86 to 90 (DGTTT), glycine 413, 477 to 479 (NAA), and aspartate 493.

Belongs to the chaperonin (HSP60) family. As to quaternary structure, forms a cylinder of 14 subunits composed of two heptameric rings stacked back-to-back. Interacts with the co-chaperonin GroES.

The protein resides in the cytoplasm. It catalyses the reaction ATP + H2O + a folded polypeptide = ADP + phosphate + an unfolded polypeptide.. Its function is as follows. Together with its co-chaperonin GroES, plays an essential role in assisting protein folding. The GroEL-GroES system forms a nano-cage that allows encapsulation of the non-native substrate proteins and provides a physical environment optimized to promote and accelerate protein folding. The sequence is that of Chaperonin GroEL 1 from Paenarthrobacter aurescens (strain TC1).